Reading from the N-terminus, the 218-residue chain is Ribose-5-phosphate isomerase A (218 aa).

Substrate is bound by residues 28-31 (TGST), 81-84 (DGAD), and 94-97 (KGGG). E103 (proton acceptor) is an active-site residue. K121 provides a ligand contact to substrate.

The protein belongs to the ribose 5-phosphate isomerase family. Homodimer.

The enzyme catalyses aldehydo-D-ribose 5-phosphate = D-ribulose 5-phosphate. It participates in carbohydrate degradation; pentose phosphate pathway; D-ribose 5-phosphate from D-ribulose 5-phosphate (non-oxidative stage): step 1/1. Functionally, catalyzes the reversible conversion of ribose-5-phosphate to ribulose 5-phosphate. This chain is Ribose-5-phosphate isomerase A, found in Vibrio campbellii (strain ATCC BAA-1116).